The sequence spans 184 residues: Cytidylate kinase (184 aa).

8–16 (GQPGSGKTT) serves as a coordination point for ATP.

The protein belongs to the cytidylate kinase family. Type 2 subfamily.

The protein localises to the cytoplasm. It carries out the reaction CMP + ATP = CDP + ADP. The catalysed reaction is dCMP + ATP = dCDP + ADP. The sequence is that of Cytidylate kinase from Pyrobaculum islandicum (strain DSM 4184 / JCM 9189 / GEO3).